The primary structure comprises 161 residues: Small ribosomal subunit protein uS9 (161 aa).

Belongs to the universal ribosomal protein uS9 family.

The polypeptide is Small ribosomal subunit protein uS9 (Bartonella tribocorum (strain CIP 105476 / IBS 506)).